A 439-amino-acid polypeptide reads, in one-letter code: Na(+)/H(+) antiporter NhaA 1 (439 aa).

11 helical membrane passes run 14–34, 60–80, 98–118, 127–147, 156–176, 179–199, 213–233, 303–323, 335–355, 375–395, and 408–428; these read ITGG…ANLA, ISLH…FIGL, ALPL…YYFF, GWGI…AMVG, IFLS…IAIF, EQIF…LAVA, IGLI…TIAG, HPIS…GVIV, IVLG…FLFA, IIGT…ISDL, and VAVL…LISA.

It belongs to the NhaA Na(+)/H(+) (TC 2.A.33) antiporter family.

The protein localises to the cell inner membrane. The enzyme catalyses Na(+)(in) + 2 H(+)(out) = Na(+)(out) + 2 H(+)(in). Na(+)/H(+) antiporter that extrudes sodium in exchange for external protons. This Psychromonas ingrahamii (strain DSM 17664 / CCUG 51855 / 37) protein is Na(+)/H(+) antiporter NhaA 1.